The sequence spans 227 residues: Phosphoglycolate phosphatase (227 aa).

Asp-11 (nucleophile) is an active-site residue. The Mg(2+) site is built by Asp-11, Asp-13, and Asp-176.

Belongs to the HAD-like hydrolase superfamily. CbbY/CbbZ/Gph/YieH family. It depends on Mg(2+) as a cofactor.

It catalyses the reaction 2-phosphoglycolate + H2O = glycolate + phosphate. Its pathway is organic acid metabolism; glycolate biosynthesis; glycolate from 2-phosphoglycolate: step 1/1. Specifically catalyzes the dephosphorylation of 2-phosphoglycolate. Is involved in the dissimilation of the intracellular 2-phosphoglycolate formed during the DNA repair of 3'-phosphoglycolate ends, a major class of DNA lesions induced by oxidative stress. This chain is Phosphoglycolate phosphatase, found in Aliivibrio fischeri (strain ATCC 700601 / ES114) (Vibrio fischeri).